Reading from the N-terminus, the 83-residue chain is Small integral membrane protein 22 (83 aa).

A helical membrane pass occupies residues V32–V52. The segment at S60–P83 is disordered. Residues P63–G75 are compositionally biased toward basic and acidic residues.

As to quaternary structure, interacts with CANX and DDOST. Interacts with SQLE; this interaction modulates lipid droplet formation.

It localises to the membrane. The protein localises to the late endosome. May modulate lipid droplet formation throught interaction with SQLE. In Homo sapiens (Human), this protein is Small integral membrane protein 22.